Here is a 204-residue protein sequence, read N- to C-terminus: LexA repressor (204 aa).

The segment at residues 31–51 is a DNA-binding region (H-T-H motif); sequence VREICAKVGLSSTSTVHGHLS. Residues Ser-128 and Lys-165 each act as for autocatalytic cleavage activity in the active site.

It belongs to the peptidase S24 family. In terms of assembly, homodimer.

The enzyme catalyses Hydrolysis of Ala-|-Gly bond in repressor LexA.. In terms of biological role, represses a number of genes involved in the response to DNA damage (SOS response), including recA and lexA. In the presence of single-stranded DNA, RecA interacts with LexA causing an autocatalytic cleavage which disrupts the DNA-binding part of LexA, leading to derepression of the SOS regulon and eventually DNA repair. This chain is LexA repressor, found in Clostridium acetobutylicum (strain ATCC 824 / DSM 792 / JCM 1419 / IAM 19013 / LMG 5710 / NBRC 13948 / NRRL B-527 / VKM B-1787 / 2291 / W).